The primary structure comprises 474 residues: tRNA-2-methylthio-N(6)-dimethylallyladenosine synthase (474 aa).

In terms of domain architecture, MTTase N-terminal spans 3–120; the sequence is KKLHIKTWGC…LPEMINHVQG (118 aa). Residues cysteine 12, cysteine 49, cysteine 83, cysteine 157, cysteine 161, and cysteine 164 each contribute to the [4Fe-4S] cluster site. The Radical SAM core domain occupies 143–375; that stretch reads RADGPTAFVS…QDRITKQAMR (233 aa). A TRAM domain is found at 378–441; it reads RLMLGTVQRI…TNSLRGIVVR (64 aa).

Belongs to the methylthiotransferase family. MiaB subfamily. In terms of assembly, monomer. [4Fe-4S] cluster serves as cofactor.

Its subcellular location is the cytoplasm. The catalysed reaction is N(6)-dimethylallyladenosine(37) in tRNA + (sulfur carrier)-SH + AH2 + 2 S-adenosyl-L-methionine = 2-methylsulfanyl-N(6)-dimethylallyladenosine(37) in tRNA + (sulfur carrier)-H + 5'-deoxyadenosine + L-methionine + A + S-adenosyl-L-homocysteine + 2 H(+). Functionally, catalyzes the methylthiolation of N6-(dimethylallyl)adenosine (i(6)A), leading to the formation of 2-methylthio-N6-(dimethylallyl)adenosine (ms(2)i(6)A) at position 37 in tRNAs that read codons beginning with uridine. This Pectobacterium atrosepticum (strain SCRI 1043 / ATCC BAA-672) (Erwinia carotovora subsp. atroseptica) protein is tRNA-2-methylthio-N(6)-dimethylallyladenosine synthase.